The following is a 1024-amino-acid chain: MDPNRIIQALKGTIDPNLRLAAENELNQSYKIINFAPTLLQIIVSEQVEFPVRQAAAIYLKNMVSQYWQDREPTLGEVVFPFNIHENDRGQIRENMVEAIIRCPESIRAQLTVCLRAIIKHDFPGRWTGVVDKINLYLQSQNSGSWYGSLLALYQLVKNYEFKKAEERDPLLAAMQIFLPRLQQLITQLLSDATFISVLIQKQILKIFHALVQLINNTVMTHWMEILRTVVDRDVPAIWFSECLRGGFQETLEADEDDRPELIWWKCKKWALHILTRIFERYGSPGNVTKEYVEFADFFLKTYALGIQQVLLKVMEQHRQRQYVSPRVLQQTLSFMTQGVSHSLTWRQMKPHMQTITHELVFPLMCYKDEDERLWQEDPYEYIRMKFNVYDDHVSPATAAQTLLCTAARKRKEVLPQMMEFCHQILVDPSADPRRTDGALHVIGTLAQPLLKKRVYRDQMELMLQNYVFPLLNSNLAYLRARSCWVLHSFSPLKFHNELVLRNAVELVKHNLVEDKEMPVKVEAAIALQTLVRNQEQAKVYIRPFIRPVMQELLHIIKETENDDLTGVIQKMICEYSEEVTVIAVDMTQNLAEIFSKILQSEEYEESEDKTVMALGILSTIDTILTVMGDRKEISQQLEGICLQVIGLVLQKPIIGMAEFYEEILSLAFGLTCYCISPQMWQLLGVLYDVFQHDCFDYFTDMMPLLHNYVTVDTNMLLSDPKYLEVIYTMCKKVLTSDAGEDPECHAAKLLEVIILQCRGRGIDQCIPLFVEAVLERLTRGVKSSELRTMCLQVVIAALYYNPTLLIHTLENIRFPHSPEPITAQFINQWMNDTEFFLGLHDRKMCVIGLSILMELPSRPAVLEEVVGQIVPSVLLLFLGLKHIYASRVLNKPEQFGRAQGSEEEENEEIPSDEDEVGEKGVALQPSVAPTGNDNEDDDDEDDDEYWDDEGLEGTPLEEYSTPLDCDNGEDEYQFFTASLLRVQSSDAGWYQSLTSPLNEDQRKQLQEIYNLAQQRRSTGVKGL.

The Importin N-terminal domain maps to 22-102 (AENELNQSYK…RENMVEAIIR (81 aa)). The tract at residues 896–969 (FGRAQGSEEE…YSTPLDCDNG (74 aa)) is disordered. Acidic residues-rich tracts occupy residues 902 to 917 (SEEEENEEIPSDEDEV) and 934 to 952 (DNEDDDDEDDDEYWDDEGL).

The protein belongs to the importin beta family.

It is found in the cytoplasm. The protein resides in the nucleus. Involved in nuclear protein import, either by acting as autonomous nuclear transport receptor or as an adapter-like protein in association with the importin-beta subunit KPNB1. Acting autonomously, may serve as receptor for nuclear localization signals (NLS) and promote translocation of import substrates through the nuclear pore complex (NPC) by an energy requiring, Ran-dependent mechanism. At the nucleoplasmic side of the NPC, Ran binds to importin, the importin/substrate complex dissociates and importin is re-exported from the nucleus to the cytoplasm where GTP hydrolysis releases Ran. The directionality of nuclear import is thought to be conferred by an asymmetric distribution of the GTP- and GDP-bound forms of Ran between the cytoplasm and nucleus. In vitro mediates the nuclear import of the signal recognition particle protein SRP19. May also be involved in cytoplasm-to-nucleus shuttling of a broad spectrum of other cargos, including Argonaute-microRNAs complexes, the JUN protein, RELA/NF-kappa-B p65 subunit, the translation initiation factor EIF4E and a set of receptor-activated mothers against decapentaplegic homolog (SMAD) transcription factors that play a critical role downstream of the large family of transforming growth factor beta and bone morphogenetic protein (BMP) cytokines. The protein is Importin-8 (ipo8) of Danio rerio (Zebrafish).